Here is a 55-residue protein sequence, read N- to C-terminus: Large ribosomal subunit protein bL33 (55 aa).

Over residues Met1 to Lys10 the composition is skewed to basic and acidic residues. A disordered region spans residues Met1–Lys27.

The protein belongs to the bacterial ribosomal protein bL33 family.

This Polaromonas naphthalenivorans (strain CJ2) protein is Large ribosomal subunit protein bL33.